The primary structure comprises 529 residues: Bifunctional purine biosynthesis protein PurH (529 aa).

The MGS-like domain maps to 1-148 (MQQRRPIRRA…KNHKDVAIVV (148 aa)).

This sequence belongs to the PurH family.

It catalyses the reaction (6R)-10-formyltetrahydrofolate + 5-amino-1-(5-phospho-beta-D-ribosyl)imidazole-4-carboxamide = 5-formamido-1-(5-phospho-D-ribosyl)imidazole-4-carboxamide + (6S)-5,6,7,8-tetrahydrofolate. The enzyme catalyses IMP + H2O = 5-formamido-1-(5-phospho-D-ribosyl)imidazole-4-carboxamide. It functions in the pathway purine metabolism; IMP biosynthesis via de novo pathway; 5-formamido-1-(5-phospho-D-ribosyl)imidazole-4-carboxamide from 5-amino-1-(5-phospho-D-ribosyl)imidazole-4-carboxamide (10-formyl THF route): step 1/1. The protein operates within purine metabolism; IMP biosynthesis via de novo pathway; IMP from 5-formamido-1-(5-phospho-D-ribosyl)imidazole-4-carboxamide: step 1/1. The protein is Bifunctional purine biosynthesis protein PurH of Yersinia pseudotuberculosis serotype IB (strain PB1/+).